The primary structure comprises 660 residues: Epithelial sodium channel subunit gamma (660 aa).

At 1–55 the chain is on the cytoplasmic side; sequence MSKSGKKLTQKLKKNLPVTGPQAPTLYELMQWYCLNTNTHGCRRIVVSKGRLRRW. Residues 56 to 76 form a helical membrane-spanning segment; sequence IWISLTLCAVAVIFWQCALLL. The Extracellular portion of the chain corresponds to 77-537; sequence MSYYSVSASI…VTLLSNFGGQ (461 aa). Intrachain disulfides connect cysteine 101/cysteine 286, cysteine 209/cysteine 217, cysteine 263/cysteine 270, cysteine 375/cysteine 460, cysteine 397/cysteine 456, cysteine 401/cysteine 452, cysteine 410/cysteine 437, and cysteine 412/cysteine 426. The helical transmembrane segment at 538-558 threads the bilayer; the sequence is LGLWMSCSMICVLEIIEVFFI. The Cytoplasmic segment spans residues 559–660; the sequence is DSFWVVLRQR…IDSDEDVERL (102 aa).

It belongs to the amiloride-sensitive sodium channel (TC 1.A.6) family. SCNN1G subfamily. Component of the heterotrimeric epithelial sodium channel (ENaC) composed of an alpha/SCNN1A, a beta/SCNN1B and a gamma/SCNN1G subunit.

The protein resides in the apical cell membrane. It carries out the reaction Na(+)(in) = Na(+)(out). Its activity is regulated as follows. Originally identified and characterized by its inhibition by the diuretic drug amiloride. Its function is as follows. This is one of the three pore-forming subunits of the heterotrimeric epithelial sodium channel (ENaC), a critical regulator of sodium balance and fluid homeostasis. ENaC operates in epithelial tissues, where it mediates the electrodiffusion of sodium ions from extracellular fluid through the apical membrane of cells, with water following osmotically. The protein is Epithelial sodium channel subunit gamma (scnn1g-a) of Xenopus laevis (African clawed frog).